Consider the following 167-residue polypeptide: Ribosome maturation factor RimM (167 aa).

One can recognise a PRC barrel domain in the interval 94–165 (ENEFYYSDII…KIIITPMEGL (72 aa)).

The protein belongs to the RimM family. As to quaternary structure, binds ribosomal protein uS19.

It is found in the cytoplasm. Functionally, an accessory protein needed during the final step in the assembly of 30S ribosomal subunit, possibly for assembly of the head region. Essential for efficient processing of 16S rRNA. May be needed both before and after RbfA during the maturation of 16S rRNA. It has affinity for free ribosomal 30S subunits but not for 70S ribosomes. The polypeptide is Ribosome maturation factor RimM (Staphylococcus aureus (strain MRSA252)).